The primary structure comprises 308 residues: Pantothenate kinase (308 aa).

An ATP-binding site is contributed by 90–97 (GSVAVGKS).

The protein belongs to the prokaryotic pantothenate kinase family.

Its subcellular location is the cytoplasm. The enzyme catalyses (R)-pantothenate + ATP = (R)-4'-phosphopantothenate + ADP + H(+). It participates in cofactor biosynthesis; coenzyme A biosynthesis; CoA from (R)-pantothenate: step 1/5. In Sorangium cellulosum (strain So ce56) (Polyangium cellulosum (strain So ce56)), this protein is Pantothenate kinase.